The sequence spans 266 residues: 3-methyl-2-oxobutanoate hydroxymethyltransferase 2 (266 aa).

The Mg(2+) site is built by aspartate 45 and aspartate 84. Residues aspartate 45–serine 46, aspartate 84, and lysine 112 each bind 3-methyl-2-oxobutanoate. Glutamate 114 serves as a coordination point for Mg(2+). Glutamate 181 serves as the catalytic Proton acceptor.

Belongs to the PanB family. In terms of assembly, homodecamer; pentamer of dimers. The cofactor is Mg(2+).

It is found in the cytoplasm. The catalysed reaction is 3-methyl-2-oxobutanoate + (6R)-5,10-methylene-5,6,7,8-tetrahydrofolate + H2O = 2-dehydropantoate + (6S)-5,6,7,8-tetrahydrofolate. It participates in cofactor biosynthesis; (R)-pantothenate biosynthesis; (R)-pantoate from 3-methyl-2-oxobutanoate: step 1/2. Its function is as follows. Catalyzes the reversible reaction in which hydroxymethyl group from 5,10-methylenetetrahydrofolate is transferred onto alpha-ketoisovalerate to form ketopantoate. The polypeptide is 3-methyl-2-oxobutanoate hydroxymethyltransferase 2 (Pseudomonas fluorescens (strain ATCC BAA-477 / NRRL B-23932 / Pf-5)).